Reading from the N-terminus, the 765-residue chain is Phosphoribosylformylglycinamidine synthase subunit PurL (765 aa).

Residues 1-13 (MTVSPTSAPTQAI) are compositionally biased toward polar residues. The disordered stretch occupies residues 1–32 (MTVSPTSAPTQAIDTVERAATTPDEPQPFGEL). H65 is a catalytic residue. ATP is bound by residues Y68 and K112. Residue E114 participates in Mg(2+) binding. Substrate-binding positions include 115-118 (SHNH) and R137. The Proton acceptor role is filled by H116. D138 contributes to the Mg(2+) binding site. Q263 serves as a coordination point for substrate. Residue D291 coordinates Mg(2+). 335–337 (ESQ) serves as a coordination point for substrate. N523 and G560 together coordinate ATP. N561 contributes to the Mg(2+) binding site. Residue S563 coordinates substrate.

Belongs to the FGAMS family. Monomer. Part of the FGAM synthase complex composed of 1 PurL, 1 PurQ and 2 PurS subunits.

The protein localises to the cytoplasm. It catalyses the reaction N(2)-formyl-N(1)-(5-phospho-beta-D-ribosyl)glycinamide + L-glutamine + ATP + H2O = 2-formamido-N(1)-(5-O-phospho-beta-D-ribosyl)acetamidine + L-glutamate + ADP + phosphate + H(+). Its pathway is purine metabolism; IMP biosynthesis via de novo pathway; 5-amino-1-(5-phospho-D-ribosyl)imidazole from N(2)-formyl-N(1)-(5-phospho-D-ribosyl)glycinamide: step 1/2. Its function is as follows. Part of the phosphoribosylformylglycinamidine synthase complex involved in the purines biosynthetic pathway. Catalyzes the ATP-dependent conversion of formylglycinamide ribonucleotide (FGAR) and glutamine to yield formylglycinamidine ribonucleotide (FGAM) and glutamate. The FGAM synthase complex is composed of three subunits. PurQ produces an ammonia molecule by converting glutamine to glutamate. PurL transfers the ammonia molecule to FGAR to form FGAM in an ATP-dependent manner. PurS interacts with PurQ and PurL and is thought to assist in the transfer of the ammonia molecule from PurQ to PurL. This chain is Phosphoribosylformylglycinamidine synthase subunit PurL, found in Mycolicibacterium paratuberculosis (strain ATCC BAA-968 / K-10) (Mycobacterium paratuberculosis).